A 776-amino-acid polypeptide reads, in one-letter code: DNA topoisomerase 1 (776 aa).

A Toprim domain is found at 1-111 (MKLVIVESPA…VKSDDFFKRV (111 aa)). 2 residues coordinate Mg(2+): Glu-7 and Asp-80. Positions 132–568 (DTNLVNAQQA…FWSGFNHNIE (437 aa)) constitute a Topo IA-type catalytic domain. Positions 166–171 (SAGRVQ) are interaction with DNA. The active-site O-(5'-phospho-DNA)-tyrosine intermediate is the Tyr-304. A C4-type zinc finger spans residues 600 to 627 (CPSCNTGELSLKLGKFGAFLACSNYPEC).

The protein belongs to the type IA topoisomerase family. Monomer. It depends on Mg(2+) as a cofactor.

The enzyme catalyses ATP-independent breakage of single-stranded DNA, followed by passage and rejoining.. Functionally, releases the supercoiling and torsional tension of DNA, which is introduced during the DNA replication and transcription, by transiently cleaving and rejoining one strand of the DNA duplex. Introduces a single-strand break via transesterification at a target site in duplex DNA. The scissile phosphodiester is attacked by the catalytic tyrosine of the enzyme, resulting in the formation of a DNA-(5'-phosphotyrosyl)-enzyme intermediate and the expulsion of a 3'-OH DNA strand. The free DNA strand then undergoes passage around the unbroken strand, thus removing DNA supercoils. Finally, in the religation step, the DNA 3'-OH attacks the covalent intermediate to expel the active-site tyrosine and restore the DNA phosphodiester backbone. The protein is DNA topoisomerase 1 of Rickettsia conorii (strain ATCC VR-613 / Malish 7).